Consider the following 291-residue polypeptide: 4-hydroxy-tetrahydrodipicolinate synthase (291 aa).

Residue Thr-44 participates in pyruvate binding. Tyr-132 functions as the Proton donor/acceptor in the catalytic mechanism. Residue Lys-160 is the Schiff-base intermediate with substrate of the active site. Ile-202 contacts pyruvate.

The protein belongs to the DapA family. In terms of assembly, homotetramer; dimer of dimers.

The protein resides in the cytoplasm. It carries out the reaction L-aspartate 4-semialdehyde + pyruvate = (2S,4S)-4-hydroxy-2,3,4,5-tetrahydrodipicolinate + H2O + H(+). Its pathway is amino-acid biosynthesis; L-lysine biosynthesis via DAP pathway; (S)-tetrahydrodipicolinate from L-aspartate: step 3/4. Its function is as follows. Catalyzes the condensation of (S)-aspartate-beta-semialdehyde [(S)-ASA] and pyruvate to 4-hydroxy-tetrahydrodipicolinate (HTPA). The chain is 4-hydroxy-tetrahydrodipicolinate synthase from Syntrophobacter fumaroxidans (strain DSM 10017 / MPOB).